Here is a 394-residue protein sequence, read N- to C-terminus: Elongation factor Tu (394 aa).

In terms of domain architecture, tr-type G spans 10 to 204; sequence KPHVNIGTIG…AVDEYIPTPD (195 aa). A G1 region spans residues 19–26; that stretch reads GHIDHGKT. 19–26 is a GTP binding site; the sequence is GHIDHGKT. T26 is a Mg(2+) binding site. The G2 stretch occupies residues 60–64; it reads GITIN. A G3 region spans residues 81-84; that stretch reads DCPG. GTP is bound by residues 81-85 and 136-139; these read DCPGH and NKCD. Residues 136-139 form a G4 region; the sequence is NKCD. The G5 stretch occupies residues 174–176; that stretch reads SAL.

This sequence belongs to the TRAFAC class translation factor GTPase superfamily. Classic translation factor GTPase family. EF-Tu/EF-1A subfamily. As to quaternary structure, monomer.

The protein resides in the cytoplasm. The enzyme catalyses GTP + H2O = GDP + phosphate + H(+). GTP hydrolase that promotes the GTP-dependent binding of aminoacyl-tRNA to the A-site of ribosomes during protein biosynthesis. This is Elongation factor Tu from Mycoplasmoides gallisepticum (strain R(low / passage 15 / clone 2)) (Mycoplasma gallisepticum).